A 579-amino-acid polypeptide reads, in one-letter code: ATP-dependent lipid A-core flippase (579 aa).

A run of 4 helical transmembrane segments spans residues 24 to 44 (FLAA…LAEM), 61 to 81 (LMLP…TFLG), 147 to 167 (LFVI…TLIF), and 253 to 273 (LLVA…ALMA). The ABC transmembrane type-1 domain occupies 25-306 (LAAVVGYAIY…LTEVNSTIQK (282 aa)). The region spanning 338 to 573 (VRFEGVRFRY…DGAYAALHQL (236 aa)) is the ABC transporter domain. Position 372–379 (372–379 (GRSGSGKS)) interacts with ATP.

It belongs to the ABC transporter superfamily. Lipid exporter (TC 3.A.1.106) family. In terms of assembly, homodimer.

The protein resides in the cell inner membrane. It carries out the reaction ATP + H2O + lipid A-core oligosaccharideSide 1 = ADP + phosphate + lipid A-core oligosaccharideSide 2.. Involved in lipopolysaccharide (LPS) biosynthesis. Translocates lipid A-core from the inner to the outer leaflet of the inner membrane. Transmembrane domains (TMD) form a pore in the inner membrane and the ATP-binding domain (NBD) is responsible for energy generation. This Chromohalobacter salexigens (strain ATCC BAA-138 / DSM 3043 / CIP 106854 / NCIMB 13768 / 1H11) protein is ATP-dependent lipid A-core flippase.